Consider the following 274-residue polypeptide: Hydroxyethylthiazole kinase (274 aa).

Position 50 (M50) interacts with substrate. Residues R126 and S171 each coordinate ATP. A200 provides a ligand contact to substrate.

This sequence belongs to the Thz kinase family. Mg(2+) serves as cofactor.

The enzyme catalyses 5-(2-hydroxyethyl)-4-methylthiazole + ATP = 4-methyl-5-(2-phosphooxyethyl)-thiazole + ADP + H(+). The protein operates within cofactor biosynthesis; thiamine diphosphate biosynthesis; 4-methyl-5-(2-phosphoethyl)-thiazole from 5-(2-hydroxyethyl)-4-methylthiazole: step 1/1. In terms of biological role, catalyzes the phosphorylation of the hydroxyl group of 4-methyl-5-beta-hydroxyethylthiazole (THZ). This chain is Hydroxyethylthiazole kinase, found in Acinetobacter baylyi (strain ATCC 33305 / BD413 / ADP1).